Consider the following 278-residue polypeptide: Large ribosomal subunit protein uL2 (278 aa).

A compositionally biased stretch (basic residues) spans 212–221; that stretch reads NRWLGKRPHN. The disordered stretch occupies residues 212–278; the sequence is NRWLGKRPHN…ILSSRHNRKK (67 aa).

It belongs to the universal ribosomal protein uL2 family. In terms of assembly, part of the 50S ribosomal subunit. Forms a bridge to the 30S subunit in the 70S ribosome.

One of the primary rRNA binding proteins. Required for association of the 30S and 50S subunits to form the 70S ribosome, for tRNA binding and peptide bond formation. It has been suggested to have peptidyltransferase activity; this is somewhat controversial. Makes several contacts with the 16S rRNA in the 70S ribosome. The polypeptide is Large ribosomal subunit protein uL2 (Methylorubrum populi (strain ATCC BAA-705 / NCIMB 13946 / BJ001) (Methylobacterium populi)).